The sequence spans 662 residues: 3',5'-cyclic-AMP phosphodiesterase, isoform F (662 aa).

Disordered regions lie at residues 79-108 (VPASNKSRRPNQSSSASRSGNPPGAPLSQG) and 207-245 (SAGQYARSRSPRGPPMSQISGVKRPLSHTNSFTGERLPT). Over residues 80–98 (PASNKSRRPNQSSSASRSG) the composition is skewed to polar residues. The 330-residue stretch at 248–577 (VETPRENELG…DYYQSMIPPS (330 aa)) folds into the PDEase domain. Residue His324 is the Proton donor of the active site. Residue 324–328 (HNSLH) coordinates 3',5'-cyclic AMP. A divalent metal cation-binding residues include His328, His364, Asp365, and Asp482. Residues Asp365, Asp482, and Gln533 each contribute to the 3',5'-cyclic AMP site. The span at 599–616 (EESDQENLAELEEGDESG) shows a compositional bias: acidic residues. A disordered region spans residues 599 to 662 (EESDQENLAE…CQNQPQHGGM (64 aa)). The segment covering 617 to 634 (GESTTTGTTGTTAASALS) has biased composition (low complexity). The segment covering 635–646 (GAGGGGGGGGGM) has biased composition (gly residues). Residues 652-662 (GCQNQPQHGGM) are compositionally biased toward polar residues.

This sequence belongs to the cyclic nucleotide phosphodiesterase family. PDE4 subfamily. In terms of assembly, monomer. It depends on a divalent metal cation as a cofactor.

The catalysed reaction is 3',5'-cyclic AMP + H2O = AMP + H(+). Its pathway is purine metabolism; 3',5'-cyclic AMP degradation; AMP from 3',5'-cyclic AMP: step 1/1. Functionally, hydrolyzes the second messenger cAMP, which is a key regulator of many important physiological processes. Vital for female fertility. Required for learning/memory. This Drosophila melanogaster (Fruit fly) protein is 3',5'-cyclic-AMP phosphodiesterase, isoform F.